Here is a 276-residue protein sequence, read N- to C-terminus: Shikimate dehydrogenase (NADP(+)) (276 aa).

Shikimate-binding positions include 19-21 and T66; that span reads SKS. K70 functions as the Proton acceptor in the catalytic mechanism. D82 contacts NADP(+). Shikimate is bound by residues N91 and D107. Residues 133–137, 157–162, and L222 contribute to the NADP(+) site; these read GAGGA and NRTRSR. A shikimate-binding site is contributed by Y224. Position 245 (G245) interacts with NADP(+).

This sequence belongs to the shikimate dehydrogenase family. Homodimer.

It catalyses the reaction shikimate + NADP(+) = 3-dehydroshikimate + NADPH + H(+). It functions in the pathway metabolic intermediate biosynthesis; chorismate biosynthesis; chorismate from D-erythrose 4-phosphate and phosphoenolpyruvate: step 4/7. Functionally, involved in the biosynthesis of the chorismate, which leads to the biosynthesis of aromatic amino acids. Catalyzes the reversible NADPH linked reduction of 3-dehydroshikimate (DHSA) to yield shikimate (SA). The sequence is that of Shikimate dehydrogenase (NADP(+)) from Ruegeria sp. (strain TM1040) (Silicibacter sp.).